Here is an 84-residue protein sequence, read N- to C-terminus: Small ribosomal subunit protein uS17 (84 aa).

Belongs to the universal ribosomal protein uS17 family. In terms of assembly, part of the 30S ribosomal subunit.

In terms of biological role, one of the primary rRNA binding proteins, it binds specifically to the 5'-end of 16S ribosomal RNA. The protein is Small ribosomal subunit protein uS17 of Erwinia tasmaniensis (strain DSM 17950 / CFBP 7177 / CIP 109463 / NCPPB 4357 / Et1/99).